Consider the following 96-residue polypeptide: Small ribosomal subunit protein uS19 (96 aa).

The protein belongs to the universal ribosomal protein uS19 family.

Its function is as follows. Protein S19 forms a complex with S13 that binds strongly to the 16S ribosomal RNA. The protein is Small ribosomal subunit protein uS19 of Solibacter usitatus (strain Ellin6076).